The primary structure comprises 572 residues: Thiamine biosynthesis protein THI22 (572 aa).

A signal peptide spans 1-19 (MVIILLGLCTLGFPRTAFC).

Belongs to the thiaminase-2 family.

Its subcellular location is the secreted. Functionally, is not required for thiamine biosynthesis. The sequence is that of Thiamine biosynthesis protein THI22 (THI22) from Saccharomyces cerevisiae (strain ATCC 204508 / S288c) (Baker's yeast).